The sequence spans 132 residues: Large ribosomal subunit protein bL17 (132 aa).

The protein belongs to the bacterial ribosomal protein bL17 family. As to quaternary structure, part of the 50S ribosomal subunit. Contacts protein L32.

The protein is Large ribosomal subunit protein bL17 of Variovorax paradoxus (strain S110).